The following is a 237-amino-acid chain: MDSFLRLLIHGASGRMGQALLRLASEDPSFQVAAAVVGQAPDRHVSDGVPFFAAAELAAVPAFDVAIDFSLPQGFSSLLALCVARAVPLVSGTTGLDSRQHEALVMAGAQIPLVWGSNFSVGMAVLVNLVERAGDALSGWDCDIVESHHVHKQDAPSGSALTLGEAVACKGIAPRYTSLRAGDIVGDHLVQFTGLGERIELVHRATNRDVFARGALYVARRVVGRVPGCYRVRDLIM.

NAD(+) contacts are provided by residues 11–16, 92–94, and 116–119; these read GASGRM, GTT, and GSNF. His-148 (proton donor/acceptor) is an active-site residue. His-149 contacts (S)-2,3,4,5-tetrahydrodipicolinate. Lys-152 (proton donor) is an active-site residue. 158–159 provides a ligand contact to (S)-2,3,4,5-tetrahydrodipicolinate; that stretch reads GS.

It belongs to the DapB family.

The protein resides in the cytoplasm. The catalysed reaction is (S)-2,3,4,5-tetrahydrodipicolinate + NAD(+) + H2O = (2S,4S)-4-hydroxy-2,3,4,5-tetrahydrodipicolinate + NADH + H(+). The enzyme catalyses (S)-2,3,4,5-tetrahydrodipicolinate + NADP(+) + H2O = (2S,4S)-4-hydroxy-2,3,4,5-tetrahydrodipicolinate + NADPH + H(+). Its pathway is amino-acid biosynthesis; L-lysine biosynthesis via DAP pathway; (S)-tetrahydrodipicolinate from L-aspartate: step 4/4. In terms of biological role, catalyzes the conversion of 4-hydroxy-tetrahydrodipicolinate (HTPA) to tetrahydrodipicolinate. This is 4-hydroxy-tetrahydrodipicolinate reductase from Xylella fastidiosa (strain 9a5c).